Consider the following 444-residue polypeptide: Forkhead box protein F2 (444 aa).

The tract at residues 32-98 (PAAAAAAAAA…KKASSGLRRP (67 aa)) is disordered. Residues 34–75 (AAAAAAAAPETTSSSSSSSSASCASSSSSSNSASAPSAACKS) show a composition bias toward low complexity. Residues 76–87 (AGGGGAGAGSGG) are compositionally biased toward gly residues. Positions 99–190 (EKPPYSYIAL…EFMFEEGSFR (92 aa)) form a DNA-binding region, fork-head. Disordered stretches follow at residues 256 to 323 (GAGA…SPAM) and 338 to 367 (AHWSSPGASPYLKQPPALTPSSNPAASAGL). The segment covering 263 to 274 (AHPHHHHHHHVP) has biased composition (basic residues). Residues 293–308 (GPGGVGAAGGGGGGDY) are compositionally biased toward gly residues. Low complexity predominate over residues 309-323 (GPDSSSSPVPSSPAM).

Interacts with the transcription factors TBP and TFIIB. As to expression, lung and placenta. Predominantly expressed in gastrointestinal tract including stomach.

Its subcellular location is the nucleus. Its function is as follows. Probable transcription activator for a number of lung-specific genes. Mediates up-regulation of the E3 ligase IRF2BPL and drives ubiquitination and degradation of CTNNB1. The protein is Forkhead box protein F2 (FOXF2) of Homo sapiens (Human).